We begin with the raw amino-acid sequence, 104 residues long: UPF0213 protein YsiG (104 aa).

The GIY-YIG domain occupies 2–79 (NQYFTYILQC…KLVRKQKLSL (78 aa)).

The protein belongs to the UPF0213 family.

The polypeptide is UPF0213 protein YsiG (ysiG) (Lactococcus lactis subsp. lactis (strain IL1403) (Streptococcus lactis)).